The chain runs to 343 residues: tRNA N6-adenosine threonylcarbamoyltransferase (343 aa).

2 residues coordinate Fe cation: H111 and H115. Substrate is bound by residues 135-139 (VLSGG), D168, G181, and N280. D306 contributes to the Fe cation binding site.

This sequence belongs to the KAE1 / TsaD family. Requires Fe(2+) as cofactor.

Its subcellular location is the cytoplasm. It catalyses the reaction L-threonylcarbamoyladenylate + adenosine(37) in tRNA = N(6)-L-threonylcarbamoyladenosine(37) in tRNA + AMP + H(+). Functionally, required for the formation of a threonylcarbamoyl group on adenosine at position 37 (t(6)A37) in tRNAs that read codons beginning with adenine. Is involved in the transfer of the threonylcarbamoyl moiety of threonylcarbamoyl-AMP (TC-AMP) to the N6 group of A37, together with TsaE and TsaB. TsaD likely plays a direct catalytic role in this reaction. The polypeptide is tRNA N6-adenosine threonylcarbamoyltransferase (Protochlamydia amoebophila (strain UWE25)).